The following is a 158-amino-acid chain: Transcription elongation factor GreA (158 aa).

This sequence belongs to the GreA/GreB family.

Functionally, necessary for efficient RNA polymerase transcription elongation past template-encoded arresting sites. The arresting sites in DNA have the property of trapping a certain fraction of elongating RNA polymerases that pass through, resulting in locked ternary complexes. Cleavage of the nascent transcript by cleavage factors such as GreA or GreB allows the resumption of elongation from the new 3'terminus. GreA releases sequences of 2 to 3 nucleotides. The chain is Transcription elongation factor GreA from Pelobacter propionicus (strain DSM 2379 / NBRC 103807 / OttBd1).